A 223-amino-acid chain; its full sequence is N-terminal Xaa-Pro-Lys N-methyltransferase 1 (223 aa).

Position 1 is an N-acetylmethionine (Met1). N-acetylthreonine; in N-terminal Xaa-Pro-Lys N-methyltransferase 1, N-terminally processed is present on Thr2. S-adenosyl-L-methionine-binding positions include Gly69, Arg74, 91–93 (DVT), 119–120 (LQ), and Gln135.

The protein belongs to the methyltransferase superfamily. NTM1 family.

Its subcellular location is the nucleus. The enzyme catalyses N-terminal L-alanyl-L-prolyl-L-lysyl-[protein] + 3 S-adenosyl-L-methionine = N-terminal N,N,N-trimethyl-L-alanyl-L-prolyl-L-lysyl-[protein] + 3 S-adenosyl-L-homocysteine + 3 H(+). It carries out the reaction N-terminal L-seryl-L-prolyl-L-lysyl-[protein] + 3 S-adenosyl-L-methionine = N-terminal N,N,N-trimethyl-L-seryl-L-prolyl-L-lysyl-[protein] + 3 S-adenosyl-L-homocysteine + 3 H(+). It catalyses the reaction N-terminal L-prolyl-L-prolyl-L-lysyl-[protein] + 2 S-adenosyl-L-methionine = N-terminal N,N-dimethyl-L-prolyl-L-prolyl-L-lysyl-[protein] + 2 S-adenosyl-L-homocysteine + 2 H(+). Functionally, distributive alpha-N-methyltransferase that methylates the N-terminus of target proteins containing the N-terminal motif [Ala/Gly/Pro/Ser]-Pro-Lys when the initiator Met is cleaved. Specifically catalyzes mono-, di- or tri-methylation of the exposed alpha-amino group of the Ala, Gly or Ser residue in the [Ala/Gly/Ser]-Pro-Lys motif and mono- or di-methylation of Pro in the Pro-Pro-Lys motif. Some of the substrates may be primed by NTMT2-mediated monomethylation. Catalyzes the trimethylation of the N-terminal Gly in CENPA (after removal of Met-1). Responsible for the N-terminal methylation of KLHL31, MYL2, MYL3, RB1, RCC1, RPL23A and SET. Required during mitosis for normal bipolar spindle formation and chromosome segregation via its action on RCC1. The sequence is that of N-terminal Xaa-Pro-Lys N-methyltransferase 1 (NTMT1) from Ailuropoda melanoleuca (Giant panda).